The chain runs to 338 residues: Glyceraldehyde-3-phosphate dehydrogenase (338 aa).

Residues 11–12 (TI) and Gly111 each bind NAD(+). 140 to 142 (SCN) is a binding site for D-glyceraldehyde 3-phosphate. The Nucleophile role is filled by Cys141. Arg169 contacts NAD(+). 195 to 196 (HG) contributes to the D-glyceraldehyde 3-phosphate binding site. Gln302 is an NAD(+) binding site.

It belongs to the glyceraldehyde-3-phosphate dehydrogenase family. In terms of assembly, homotetramer.

The protein localises to the cytoplasm. It carries out the reaction D-glyceraldehyde 3-phosphate + phosphate + NADP(+) = (2R)-3-phospho-glyceroyl phosphate + NADPH + H(+). The catalysed reaction is D-glyceraldehyde 3-phosphate + phosphate + NAD(+) = (2R)-3-phospho-glyceroyl phosphate + NADH + H(+). It functions in the pathway carbohydrate degradation; glycolysis; pyruvate from D-glyceraldehyde 3-phosphate: step 1/5. The protein is Glyceraldehyde-3-phosphate dehydrogenase (gap) of Methanobacterium formicicum.